The following is a 461-amino-acid chain: Kynureninase (461 aa).

Residues Leu114, Thr115, 142–145, Asp228, His231, and Tyr253 contribute to the pyridoxal 5'-phosphate site; that span reads FPSD. Lys254 carries the post-translational modification N6-(pyridoxal phosphate)lysine. Trp288 and Asn316 together coordinate pyridoxal 5'-phosphate.

This sequence belongs to the kynureninase family. Homodimer. It depends on pyridoxal 5'-phosphate as a cofactor.

It is found in the cytoplasm. The catalysed reaction is L-kynurenine + H2O = anthranilate + L-alanine + H(+). The enzyme catalyses 3-hydroxy-L-kynurenine + H2O = 3-hydroxyanthranilate + L-alanine + H(+). It participates in amino-acid degradation; L-kynurenine degradation; L-alanine and anthranilate from L-kynurenine: step 1/1. It functions in the pathway cofactor biosynthesis; NAD(+) biosynthesis; quinolinate from L-kynurenine: step 2/3. In terms of biological role, catalyzes the cleavage of L-kynurenine (L-Kyn) and L-3-hydroxykynurenine (L-3OHKyn) into anthranilic acid (AA) and 3-hydroxyanthranilic acid (3-OHAA), respectively. In Lodderomyces elongisporus (strain ATCC 11503 / CBS 2605 / JCM 1781 / NBRC 1676 / NRRL YB-4239) (Yeast), this protein is Kynureninase.